The following is a 3066-amino-acid chain: MATIMIGSMAISVPNTHVSRASNSVMPVQAVQMAKQVPSARGVLYTLKREGSTQVIKHEEALRKFQEAFDQDVGIQRRLLVNKHSSIQSTKEGWFDLASLNFRAGSSKEAAIARRKQEEEDFLNGKYEQQFYAGVSATKSMKFEGGSVGFRTKYWRPTPKKTKERRATSQCRKPTYVLEEVLSIASKSGKLVEFITGKGKRVKVCYVRKHGAILPKFSLPHEEGKYIHQELQYASTYEFLPYICMFAKYKSINADDITYGDSGLLFDERSSLTTNHTKLPYFVVRGRRNGKLVNALEVVENMEDIQHYSQNPEAQFFRGWKKVFDKMPPHVENHECTIDFTNEQCGELAAAISQSIFPVKKLSCKQCRQHIKHLSWEEYKQFLLAHMGCHGAEWETFQEIDGMRYVKRVIETSTAENASLQTSLEIVRLTQNYKSTHMLQIQDINKALMKGPSVTQSELEQASKQLLAMTQWWKNHMALTDEDALKVFRNKRSSKALLNPSLLCDNQLDKNGNFVWGERGRHSKRFFANYFEEVVPSEGYSKYVIRTNPNGQRELAIGSLIVPLDFERARMALQGKSVTREPITMSCISRQDGNFVYPCCCVTHDDGKAFYSELKSPTKRHLVIGTSGDPKYIDLPATDADRMYIAKEGFCYLNIFLAMLVNVNEDEAKDFTKMVRDVIVPRLGKWPTMLDVATAAYMLTVFHPETRNAELPRILVDHACQTMHVIDSFGSLTVGYHVLKAGTVNQLIQFASNDLQSEMKFYRVGGEVQQRMKCETALITSIFKPKRMIQILENDPYILLMGLVSPSILIHMYRMKHFEKGVELWISKEHSVAKIFIILGQLTKRVAANDVLLEQLEMISETSERFMSILEDCPQAPHSYKTAKDLLTMYIEGKASNNQLVENGFVDMNDKLYMAYEKIYSDRLKQEWRALSWLEKFSITWQLKRFAPHTEKCLTKKVVEESSASSGNFASVCFMNAQSHLRNVRNTLFQKCDQVWTASVRAFVRLIISTLHRCYSDIVYLVNICIIFSLLVQMTSVLQGIVNTARRDKALLSGWKRKEDEEAVIHLYEMCEKMEGGHPSIEKFLDHVKGVRPDLLPVAVSMTGQSEDVSAQAKTATQLQLEKIVAFMALLTMCIDNERSDAVFKVLSKLKAFFSTMGEDVKVQSLDEIQSIDEDKKLTIDFDLETNKESSSVSFDVKFEAWWNRQLEQNRVIPHYRSTGEFLEFTRETAAKIANLVATSSHTEFLIRGAVGSGKSTGLPHHLSRKGKVLLLEPTRPLAENVSKQLSFEPFYHNVTLRMRGLSKFGSSNIVVMTSGFAFHYYFNNPQQLSDFDFIIIDECHVQDSPTIAFNCALKEFEFSGKLIKVSATTPGRECEFTTQHPVKLKVEDHLSFQNFVQAQGTGSNADMIQHGNNLLVYVASYNEVDQLSRLLTEKHYKVTKVDGRTMQMGNVEIATTGTEVKPHFIVATNIIENGVTLDIDCVIDFGLKVVATLDTDNRCVRYNKQSVSYGERIQRLGRVGRCKPGFALRIGHTGKGVEEVPEFIATEAAFLSFAYGLPVTTQSVSTNILSRCTVKQARVALNFELTPFFTTNFIKYDGSMHVIDTRLLKSYKLRESEMLLTKLAIPYQFVGQWVTVKEYERQGIHLNCPEKVKIPFYVHGIPDKLYEMLWDTVCKYKNDAGFGSVKSVNATKISYTLSTDPTAIPRTLAILDHLLSEEMTKKSHFDTIGSAVTGYSFSLAGIADGFRKRYLKDYTQHNIAVLQQAKAQLLEFDCNKVDINNLHNVEGIGILNAVQLQSKHEVSKFLQLKGKWDGKKFMNDAVVAIFTLVGGGWMLWDYFTRVIREPVSTQGKKRQIQKLKFRDAFDRKIGREVYADDYTMEHRFGEAYTKKGKQKGSTRTKGMGRKSRNFIHLYGVEPENYSMIRFVDPLTGHTMDEHPRVDIRMVQQEFEEIRKDMIGEGELDRQRVYHNPGLQAYFIGKNTEEALKVDLTPHRPTLLCQNSNAIAGFPEREDELRQTGLPQVVSKSDVPRAKERVEMESKSVYKGLRDYSGISTLICQLTNSSDGHKETMFGVGYGSFIITNGHLFRRNNGMLTVKTWHGEFVIHNTTQLKIHFIQGRDVILIRMPKDFPPFGKRNLFRQPKREERVCMVGTNFQEKSLRATVSESSMILPEGKGSFWIHWITTQDGFCGLPLVSVNDGHIVGIHGLTSNDSEKNFFVPLTDGFEKEYLENADNLSWDKHWFWEPSKIAWGSLNLVEEQPKEEFKISKLVSDLFGNTVTVQGRKERWVLDAMEGNLAACGQDDSALVTKHVVKGKCPYFAQYLSVNQEAKSFFEPLMGAYQPSRLNKDAFKRGFFKYNKPVVLNEVDFQSFERAVAGVKLMMMEFDFKECVYVTDPDEIYDSLNMKAAVGAQYKGKKQDYFSGMDSFDKERLLYLSCERLFYGEKGVWNGSLKAELRPIEKVQANKTRTFTAAPIDTLLGAKVCVDDFNNQFYSLNLTCPWTVGMTKFYRGWDKLMRSLPDGWVYCHADGSQFDSSLTPLLLNAVLDVRSFFMEDWWVGREMLENLYAEIVYTPILAPDGTIFKKFRGNNSGQPSTVVDNTLMVVIALYYSGCKQGWSEEDIQERLVFFANGDDIILAVSDKDTWLYDTLSTSFAELGLNYNFEERTKKREELWFMSHKAMLVDGIYIPKLEPERIVSILEWDRSKELMHRTEAICASMIEAWGYTELLQEIRKFYLWLLNKDEFKELASSGKAPYIAETALRKLYTDVNAQTSELQRYLEVLDFTHADDCCESVSLQSGKEKEGDMDAGKDPKKSTSSSKGAGTSSKDVNVGSKGKVVPRLQKITRKMNLPMVEGKIILSLDHLLEYKPNQVDLFNTRATRTQFEAWYNAVKDEYELDDEQMGVVMNGFMVWCIDNGTSPDANGVWVMMDGEEQIEYPLKPIVENAKPTLRQIMHHFSDAAEAYIEMRNSESPYMPRYGLLRNLRDRELARYAFDFYEVTSKTPNRAREAIAQMKAAALSGVNNKLFGLDGNISTNSENTERHTARDVNQNMHTLLGMGPPQ.

The region spanning 168 to 308 (TSQCRKPTYV…VENMEDIQHY (141 aa)) is the Peptidase S30 domain. Active-site for P1 proteinase activity residues include histidine 221, glutamate 230, and serine 262. Positions 361–364 (KLSC) match the Involved in interaction with stylet and aphid transmission motif. The Involved in virions binding and aphid transmission motif lies at 617-619 (PTK). Residues 643–765 (MYIAKEGFCY…QSEMKFYRVG (123 aa)) enclose the Peptidase C6 domain. Catalysis depends on for helper component proteinase activity residues cysteine 651 and histidine 724. Residues 1236 to 1388 (LVATSSHTEF…TQHPVKLKVE (153 aa)) form the Helicase ATP-binding domain. 1249 to 1256 (GAVGSGKS) contributes to the ATP binding site. The DECH box motif lies at 1338-1341 (DECH). Positions 1407-1566 (DMIQHGNNLL…GLPVTTQSVS (160 aa)) constitute a Helicase C-terminal domain. The Nuclear localization signal motif lies at 1891 to 1900 (KKGKQKGSTR). Position 1915 is an O-(5'-phospho-RNA)-tyrosine (tyrosine 1915). Residues 2042–2260 (SKSVYKGLRD…IAWGSLNLVE (219 aa)) form the Peptidase C4 domain. Active-site for nuclear inclusion protein A activity residues include histidine 2087, aspartate 2122, and cysteine 2192. Residues 2526–2650 (WVYCHADGSQ…AVSDKDTWLY (125 aa)) form the RdRp catalytic domain. Residues 2799–2836 (SLQSGKEKEGDMDAGKDPKKSTSSSKGAGTSSKDVNVG) are disordered. Residues 2803–2818 (GKEKEGDMDAGKDPKK) show a composition bias toward basic and acidic residues. The segment covering 2819 to 2831 (STSSSKGAGTSSK) has biased composition (low complexity). The residue at position 3048 (threonine 3048) is a Phosphothreonine.

This sequence belongs to the potyviridae genome polyprotein family. Interacts with host eIF4E protein (via cap-binding region); this interaction mediates the translation of the VPg-viral RNA conjugates. Part of a complex that comprises VPg, RNA, host EIF4E and EIF4G; this interaction mediates the translation of the VPg-viral RNA conjugates. Post-translationally, VPg is uridylylated by the polymerase and is covalently attached to the 5'-end of the genomic RNA. This uridylylated form acts as a nucleotide-peptide primer for the polymerase. Potyviral RNA is expressed as two polyproteins which undergo post-translational proteolytic processing. Genome polyprotein is processed by NIa-pro, P1 and HC-pro proteinases resulting in the production of at least ten individual proteins. P3N-PIPO polyprotein is cleaved by P1 and HC-pro proteinases resulting in the production of three individual proteins. The P1 proteinase and the HC-pro cleave only their respective C-termini autocatalytically. 6K1 is essential for proper proteolytic separation of P3 from CI.

The protein localises to the host cytoplasmic vesicle. It localises to the host nucleus. Its subcellular location is the virion. It catalyses the reaction RNA(n) + a ribonucleoside 5'-triphosphate = RNA(n+1) + diphosphate. It carries out the reaction Hydrolyzes glutaminyl bonds, and activity is further restricted by preferences for the amino acids in P6 - P1' that vary with the species of potyvirus, e.g. Glu-Xaa-Xaa-Tyr-Xaa-Gln-|-(Ser or Gly) for the enzyme from tobacco etch virus. The natural substrate is the viral polyprotein, but other proteins and oligopeptides containing the appropriate consensus sequence are also cleaved.. The catalysed reaction is Hydrolyzes a Gly-|-Gly bond at its own C-terminus, commonly in the sequence -Tyr-Xaa-Val-Gly-|-Gly, in the processing of the potyviral polyprotein.. Functionally, required for aphid transmission and also has proteolytic activity. Only cleaves a Gly-Gly dipeptide at its own C-terminus. Interacts with virions and aphid stylets. Acts as a suppressor of RNA-mediated gene silencing, also known as post-transcriptional gene silencing (PTGS), a mechanism of plant viral defense that limits the accumulation of viral RNAs. May have RNA-binding activity. In terms of biological role, has helicase activity. It may be involved in replication. Indispensable for virus replication. Reduces the abundance of host transcripts related to jasmonic acid biosynthesis therefore altering the host defenses. In order to increase its own stability, decreases host protein degradation pathways. Its function is as follows. Indispensable for virus replication. Functionally, mediates the cap-independent, EIF4E-dependent translation of viral genomic RNAs. Binds to the cap-binding site of host EIF4E and thus interferes with the host EIF4E-dependent mRNA export and translation. VPg-RNA directly binds EIF4E and is a template for transcription. Also forms trimeric complexes with EIF4E-EIF4G, which are templates for translation. In terms of biological role, has RNA-binding and proteolytic activities. An RNA-dependent RNA polymerase that plays an essential role in the virus replication. Its function is as follows. Involved in aphid transmission, cell-to-cell and systemis movement, encapsidation of the viral RNA and in the regulation of viral RNA amplification. This chain is Genome polyprotein, found in Soybean mosaic virus (strain G2) (SMV).